We begin with the raw amino-acid sequence, 492 residues long: Protein nucleotidyltransferase YdiU (492 aa).

ATP-binding residues include Gly-91, Gly-93, Arg-94, Lys-114, Asp-126, Gly-127, Arg-180, and Arg-187. Catalysis depends on Asp-256, which acts as the Proton acceptor. Mg(2+) is bound by residues Asn-257 and Asp-266. An ATP-binding site is contributed by Asp-266.

Belongs to the SELO family. It depends on Mg(2+) as a cofactor. The cofactor is Mn(2+).

The catalysed reaction is L-seryl-[protein] + ATP = 3-O-(5'-adenylyl)-L-seryl-[protein] + diphosphate. It catalyses the reaction L-threonyl-[protein] + ATP = 3-O-(5'-adenylyl)-L-threonyl-[protein] + diphosphate. It carries out the reaction L-tyrosyl-[protein] + ATP = O-(5'-adenylyl)-L-tyrosyl-[protein] + diphosphate. The enzyme catalyses L-histidyl-[protein] + UTP = N(tele)-(5'-uridylyl)-L-histidyl-[protein] + diphosphate. The catalysed reaction is L-seryl-[protein] + UTP = O-(5'-uridylyl)-L-seryl-[protein] + diphosphate. It catalyses the reaction L-tyrosyl-[protein] + UTP = O-(5'-uridylyl)-L-tyrosyl-[protein] + diphosphate. In terms of biological role, nucleotidyltransferase involved in the post-translational modification of proteins. It can catalyze the addition of adenosine monophosphate (AMP) or uridine monophosphate (UMP) to a protein, resulting in modifications known as AMPylation and UMPylation. The sequence is that of Protein nucleotidyltransferase YdiU from Synechococcus sp. (strain ATCC 27144 / PCC 6301 / SAUG 1402/1) (Anacystis nidulans).